The sequence spans 1353 residues: Tenascin-R (1353 aa).

Residues 1–33 (MGTDSENPVLRNVLISFNLLLLGAVLKPFECRL) form the signal peptide. Positions 132-156 (SLQELLSRIEMLEREVSMLRDQCNS) form a coiled coil. N-linked (GlcNAc...) asparagine glycans are attached at residues N179 and N197. EGF-like domains are found at residues 187-198 (CICSEGWAGSNC), 234-260 (CPAG…GEDC), 265-291 (CPRD…GEDC), and 292-323 (GWLR…QDCS). N277 carries N-linked (GlcNAc...) asparagine glycosylation. 2 cysteine pairs are disulfide-bonded: C296–C306 and C313–C322. 9 consecutive Fibronectin type-III domains span residues 327 to 419 (PPEN…TPQG), 420 to 504 (LKFK…TLID), 505 to 594 (GPTQ…TEID), 595 to 686 (APKN…TELD), 687 to 776 (SPRD…VRPI), 777 to 863 (TQLH…TGMD), 864 to 952 (APKD…AMDA), 953 to 1037 (PLGV…TLLD), and 1038 to 1126 (PPTN…GGRV). N-linked (GlcNAc...) asparagine glycans are attached at residues N391, N469, and N580. N-linked (GlcNAc...) asparagine glycosylation is found at N734, N790, N872, N1031, N1041, N1256, and N1342. The Fibrinogen C-terminal domain maps to 1124–1339 (GRVFANPQDC…FVEMKMRPYN (216 aa)).

It belongs to the tenascin family. As to quaternary structure, forms homodimers and homotrimers. Interacts with CNTN1, NFASC and CSPG5. Brain specific.

The protein localises to the secreted. Its subcellular location is the extracellular space. It is found in the extracellular matrix. Its function is as follows. Neural extracellular matrix (ECM) protein involved in interactions with different cells and matrix components. Involved in cell attachment and neurite formation. Interaction with CNTN1 enhances the neurite outgrowth. The polypeptide is Tenascin-R (TNR) (Gallus gallus (Chicken)).